We begin with the raw amino-acid sequence, 388 residues long: LL-diaminopimelate aminotransferase (388 aa).

Residues Tyr15 and Gly40 each coordinate substrate. Residues Tyr69, 103–104 (SK), Tyr128, Asn178, Tyr209, and 237–239 (SLS) each bind pyridoxal 5'-phosphate. Residues Lys104, Tyr128, and Asn178 each coordinate substrate. An N6-(pyridoxal phosphate)lysine modification is found at Lys240. Arg248 contacts pyridoxal 5'-phosphate. Substrate is bound at residue Arg366.

Belongs to the class-I pyridoxal-phosphate-dependent aminotransferase family. LL-diaminopimelate aminotransferase subfamily. Homodimer. Pyridoxal 5'-phosphate is required as a cofactor.

The catalysed reaction is (2S,6S)-2,6-diaminopimelate + 2-oxoglutarate = (S)-2,3,4,5-tetrahydrodipicolinate + L-glutamate + H2O + H(+). It functions in the pathway amino-acid biosynthesis; L-lysine biosynthesis via DAP pathway; LL-2,6-diaminopimelate from (S)-tetrahydrodipicolinate (aminotransferase route): step 1/1. Functionally, involved in the synthesis of meso-diaminopimelate (m-DAP or DL-DAP), required for both lysine and peptidoglycan biosynthesis. Catalyzes the direct conversion of tetrahydrodipicolinate to LL-diaminopimelate. Can also use m-DAP instead of LL-DAP as the amino-group donor. The chain is LL-diaminopimelate aminotransferase from Syntrophobacter fumaroxidans (strain DSM 10017 / MPOB).